A 243-amino-acid polypeptide reads, in one-letter code: Proteasome subunit alpha (243 aa).

It belongs to the peptidase T1A family. As to quaternary structure, the 20S proteasome core is composed of 14 alpha and 14 beta subunits that assemble into four stacked heptameric rings, resulting in a barrel-shaped structure. The two inner rings, each composed of seven catalytic beta subunits, are sandwiched by two outer rings, each composed of seven alpha subunits. The catalytic chamber with the active sites is on the inside of the barrel. Has a gated structure, the ends of the cylinder being occluded by the N-termini of the alpha-subunits. Is capped at one or both ends by the proteasome regulatory ATPase, PAN.

It localises to the cytoplasm. With respect to regulation, the formation of the proteasomal ATPase PAN-20S proteasome complex, via the docking of the C-termini of PAN into the intersubunit pockets in the alpha-rings, triggers opening of the gate for substrate entry. Interconversion between the open-gate and close-gate conformations leads to a dynamic regulation of the 20S proteasome proteolysis activity. Its function is as follows. Component of the proteasome core, a large protease complex with broad specificity involved in protein degradation. The chain is Proteasome subunit alpha from Pyrobaculum aerophilum (strain ATCC 51768 / DSM 7523 / JCM 9630 / CIP 104966 / NBRC 100827 / IM2).